A 228-amino-acid chain; its full sequence is Urease accessory protein UreF (228 aa).

The protein belongs to the UreF family. In terms of assembly, ureD, UreF and UreG form a complex that acts as a GTP-hydrolysis-dependent molecular chaperone, activating the urease apoprotein by helping to assemble the nickel containing metallocenter of UreC. The UreE protein probably delivers the nickel.

It localises to the cytoplasm. Required for maturation of urease via the functional incorporation of the urease nickel metallocenter. The polypeptide is Urease accessory protein UreF (Blochmanniella pennsylvanica (strain BPEN)).